A 260-amino-acid polypeptide reads, in one-letter code: Trans-aconitate 2-methyltransferase (260 aa).

Belongs to the methyltransferase superfamily. Tam family.

Its subcellular location is the cytoplasm. The catalysed reaction is trans-aconitate + S-adenosyl-L-methionine = (E)-3-(methoxycarbonyl)pent-2-enedioate + S-adenosyl-L-homocysteine. Functionally, catalyzes the S-adenosylmethionine monomethyl esterification of trans-aconitate. The chain is Trans-aconitate 2-methyltransferase from Paracidovorax citrulli (strain AAC00-1) (Acidovorax citrulli).